Consider the following 405-residue polypeptide: MEGFRKIEWAERYMKVLGKIREQFRKERPLEGFTVGMALHVEAKTAVLVRTLVDAGAEVAITGCNPMSTQDDVADALRESGIACYAKRGMDVEEYYEALRNVIRAEPDIVIDDGADLIFLLHGEMESYAEKVKGASEETTTGVIRLRAMEREGVLKFPVIAVNDAYTKYLFDNRYGTGQSAIDGVIRATNLLMAGKIVVVAGYGWCGRGIAMRARGMGASVVVTEVDEIRALEAVMDGFRVMRMEDAAKIGDIFITATGNRDIIREEHIRLMKDGAILANAGHFNVEIDIPALERMAKAKREARKYVTEYDLGDKRVYLLAEGRLVNLVAADGHPVEVMDMSFANQALAAKYIAENWQKLERKVYRLPEELDRMVARMKLESMGVEIDQLTEEQVRYLSDWRCGT.

Positions 113 and 138 each coordinate substrate. 139 to 141 (TTT) serves as a coordination point for NAD(+). Positions 168 and 172 each coordinate substrate. NAD(+) contacts are provided by residues asparagine 173, 202–207 (GYGWCG), glutamate 225, asparagine 260, 281–283 (AGH), and asparagine 327.

Belongs to the adenosylhomocysteinase family. NAD(+) is required as a cofactor.

It localises to the cytoplasm. The catalysed reaction is S-adenosyl-L-homocysteine + H2O = L-homocysteine + adenosine. It participates in amino-acid biosynthesis; L-homocysteine biosynthesis; L-homocysteine from S-adenosyl-L-homocysteine: step 1/1. May play a key role in the regulation of the intracellular concentration of adenosylhomocysteine. The protein is Adenosylhomocysteinase of Archaeoglobus fulgidus (strain ATCC 49558 / DSM 4304 / JCM 9628 / NBRC 100126 / VC-16).